Reading from the N-terminus, the 213-residue chain is Adenylate kinase (213 aa).

10 to 15 (GAGKGT) contacts ATP. The segment at 30-59 (STGDMFRAAMANQTEMGLLAKSYIDKGDLV) is NMP. AMP is bound by residues threonine 31, arginine 36, 57-59 (DLV), 86-89 (GYPR), and glutamine 93. Positions 127–160 (GRIIHKKTGETFHKIFNPPAGDYDENDYYQREDD) are LID. ATP contacts are provided by residues arginine 128 and 137-138 (TF). Residues arginine 157 and arginine 168 each coordinate AMP. Residue glutamine 196 coordinates ATP.

The protein belongs to the adenylate kinase family. In terms of assembly, monomer.

It localises to the cytoplasm. It carries out the reaction AMP + ATP = 2 ADP. The protein operates within purine metabolism; AMP biosynthesis via salvage pathway; AMP from ADP: step 1/1. Catalyzes the reversible transfer of the terminal phosphate group between ATP and AMP. Plays an important role in cellular energy homeostasis and in adenine nucleotide metabolism. The protein is Adenylate kinase of Streptococcus uberis (strain ATCC BAA-854 / 0140J).